The sequence spans 134 residues: Small ribosomal subunit protein uS8c (134 aa).

The protein belongs to the universal ribosomal protein uS8 family. As to quaternary structure, part of the 30S ribosomal subunit.

It localises to the plastid. It is found in the chloroplast. Functionally, one of the primary rRNA binding proteins, it binds directly to 16S rRNA central domain where it helps coordinate assembly of the platform of the 30S subunit. The protein is Small ribosomal subunit protein uS8c (rps8) of Draba nemorosa (Woodland whitlowgrass).